The primary structure comprises 212 residues: Uracil phosphoribosyltransferase (212 aa).

5-phospho-alpha-D-ribose 1-diphosphate is bound by residues arginine 78, arginine 103, and 130-138 (DPMLATGGS). Residues isoleucine 193 and 198 to 200 (GDA) contribute to the uracil site. Aspartate 199 provides a ligand contact to 5-phospho-alpha-D-ribose 1-diphosphate.

Belongs to the UPRTase family. Requires Mg(2+) as cofactor.

The enzyme catalyses UMP + diphosphate = 5-phospho-alpha-D-ribose 1-diphosphate + uracil. It functions in the pathway pyrimidine metabolism; UMP biosynthesis via salvage pathway; UMP from uracil: step 1/1. Allosterically activated by GTP. In terms of biological role, catalyzes the conversion of uracil and 5-phospho-alpha-D-ribose 1-diphosphate (PRPP) to UMP and diphosphate. This is Uracil phosphoribosyltransferase from Pseudomonas paraeruginosa (strain DSM 24068 / PA7) (Pseudomonas aeruginosa (strain PA7)).